The following is a 275-amino-acid chain: Erythroagglutinating phytohemagglutinin (275 aa).

The N-terminal stretch at 1-21 (MASSNLLSLALFLVLLTHANS) is a signal peptide. Asn33 carries N-linked (GlcNAc...) (high mannose) asparagine glycosylation. N-linked (GlcNAc...) asparagine glycosylation is found at Asn81 and Asn101.

It belongs to the leguminous lectin family.

Its function is as follows. This insecticidal carbohydrate-binding lectin is toxic for the cowpea weevil. The protein is Erythroagglutinating phytohemagglutinin (DLEC1) of Phaseolus vulgaris (Kidney bean).